Consider the following 202-residue polypeptide: Oxopyrrolidines biosynthesis cluster protein O (202 aa).

Functionally, part of the gene cluster that mediates the biosynthesis of oxopyrrolidines, polyketide-amino acid hybrid compounds with feature structures of tetramic acid. Does not seem to play a role in oxopyrrolidines A and B biosynthesis. This chain is Oxopyrrolidines biosynthesis cluster protein O, found in Penicillium oxalicum (strain 114-2 / CGMCC 5302) (Penicillium decumbens).